The chain runs to 1452 residues: MEGGEELFRVSSARLSSSNVWRNSAMDVFSRSSREADDEEALKWAALEKLPTYLRIRRGILTEEEGQSREVDITKLDLVERRNLLERLIKITDEDNEKFLLKLKERIDRVGLDLPTIEVRFEHLSVDAEARVGSRALPTVFNFTVNILEDFLNYLHILPNRKQPLPILHDVSGIIKPGRMTLLLGPPSSGKTTLLLALAGKLDKDLKVSGRVTYNGHDMNEFVAQRSSAYISQYDLHIGEMTVRETLAFSARCQGVGAKYEILAELSRREKEANIKPDPDVDIFMKAAWNEGQEANVVTDYTLKILGLEICADTIVGDEMIPGISGGQRKRLTTGEMMVGPARALFMDEISTGLDSSTTYQIVNSIRQSIHILQGTAVISLLQPAPETYDLFDDIILLSDGQIVYQGPRENVLEFFEYMGFICPERKGVADFLQEVTSRKDQEQYWARREESYKFITVREFSEAFQAFHIGRKLGDELAVPFDKSKSHPAALTTKRYGVSKKELLKACTAREYLLMKRNSFVYIFKMIQLTLMASITMTLFLRTEMHRNTTIDGAVFLGALFYALIMIMFNGFSELALSIMKLPSFYKHRDLLFFPPWAYALPTWILKIPITLVEVAIWVCMTYYVIGFEADVGRFFKQLLLLICVNQMASGLFRLMGALGRNIIVANTFGSFVLLTVLVMGGFVLSRDDVKKWWIWGYWISPMMYAQNAIAVNEFLGKSWAHVPPNSTSTETLGVSFLKSRGIFPDARWYWIGAGALIGYVFLFNFLFAVALAYLNPFGKPQAVLSEETVAERNASKRGEVIELSSLGKSSSEKGNDVRRSASSRSMSSRVGSITAADLSKRRGMILPFEPLSITFDDIRYAVDMPQEMKAQGFTEDRLELLRGVSGAFRPGVLTALMGVSGAGKTTLMDVLAGRKTGGYIDGTISISGYPKQQETFARIAGYCEQTDIHSPHVTVYESLQFSAWLRLPREVDTATRKMFIEEVMELIELIPLRDALVGLPGVNGLSTEQRKRLTVAVELVANPSIIFMDEPTSGLDARAAAIVMRTVRNTVDTGRTVVCTIHQPSIDIFDAFDELLLLKRGGEEIYVGPLGRQSSHLIKYFEGIDGVPKIKDGYNPATWMLEITSVAQEGALGNDFTELYKNSELYRRNKALIKELSVPASCSKDLYFPTKYSQSFFTQCMACFWKQHWSYWRNPPYTAVRIMFTFFIALMFGTIFWDLGSRRERQQDLLNAIGSMYIAVLFLGVQNATTVQPVIAIERTVFYRERAAGMYSAMPYAFGQVMIELPYLFLQTIIYGVIVYAMIGFEWTVAKFFWYLFFMYFTLLYFTLYGMMTVAVTPNHSIAAIISSAFYAVWNLFCGFIVPKTRMPVWWRWYYYICPISWTLYGLIASQFGDIQDRLDTNETVEQFIENFFDFKHDFVGYVALILVGISVLFLFIFAFSIKTFNFQKR.

Residues 152–425 form the ABC transporter 1 domain; sequence LNYLHILPNR…FEYMGFICPE (274 aa). An ATP-binding site is contributed by 185–192; the sequence is GPPSSGKT. An ABC transmembrane type-2 1 domain is found at 504–716; that stretch reads LLKACTAREY…AQNAIAVNEF (213 aa). Helical transmembrane passes span 521–541, 554–574, 609–629, 640–660, 664–684, 694–714, and 753–773; these read FVYI…MTLF, GAVF…NGFS, IPIT…VIGF, LLLL…MGAL, IIVA…MGGF, WWIW…IAVN, and IGAG…AVAL. The interval 808–830 is disordered; it reads LGKSSSEKGNDVRRSASSRSMSS. Residues 812–821 show a composition bias toward basic and acidic residues; it reads SSEKGNDVRR. An ABC transporter 2 domain is found at 855-1107; it reads ITFDDIRYAV…HLIKYFEGID (253 aa). 900–907 is an ATP binding site; it reads GVSGAGKT. The 215-residue stretch at 1180-1394 folds into the ABC transmembrane type-2 2 domain; it reads TQCMACFWKQ…TLYGLIASQF (215 aa). A run of 7 helical transmembrane segments spans residues 1199–1219, 1239–1259, 1287–1307, 1314–1334, 1344–1364, 1375–1395, and 1421–1441; these read YTAV…TIFW, YIAV…VIAI, LPYL…MIGF, FFWY…YGMM, IAAI…GFIV, WYYY…SQFG, and FVGY…FIFA.

This sequence belongs to the ABC transporter superfamily. ABCG family. PDR (TC 3.A.1.205) subfamily. As to expression, expressed in root hypodermal passage cells. Expressed in stem tissues, particularly the vasculature and nodes adjacent to leaf axils.

The protein localises to the cell membrane. In terms of biological role, cellular strigolactone (SL) transporter required for the exudation of SL from the root to the soil. The presence of SL in the vicinity of the roots is required for development of symbiotic interactions with arbuscular mycorrhizal fungi (AMF). Transports SL in the above ground tissues and is required for the control of shoot branching. SL regulates plant shoot architecture by inhibiting the outgrowth of axillary buds. Involved in the regulation of shootward and outward directional strigolactone transport in roots. Due to its polar localization in root cells, mediates directional shootward strigolactone transport, as well as localized outward directional transport for exudation to the soil. This Petunia axillaris (Large white petunia) protein is Pleiotropic drug resistance protein 1.